The chain runs to 474 residues: ATP synthase subunit beta (474 aa).

152-159 (GGAGVGKT) provides a ligand contact to ATP.

It belongs to the ATPase alpha/beta chains family. As to quaternary structure, F-type ATPases have 2 components, CF(1) - the catalytic core - and CF(0) - the membrane proton channel. CF(1) has five subunits: alpha(3), beta(3), gamma(1), delta(1), epsilon(1). CF(0) has four main subunits: a(1), b(1), b'(1) and c(9-12).

It localises to the cell inner membrane. It carries out the reaction ATP + H2O + 4 H(+)(in) = ADP + phosphate + 5 H(+)(out). Its function is as follows. Produces ATP from ADP in the presence of a proton gradient across the membrane. The catalytic sites are hosted primarily by the beta subunits. The protein is ATP synthase subunit beta of Rhodospirillum rubrum (strain ATCC 11170 / ATH 1.1.1 / DSM 467 / LMG 4362 / NCIMB 8255 / S1).